The primary structure comprises 114 residues: UPF0342 protein lp_1415 (114 aa).

It belongs to the UPF0342 family.

This chain is UPF0342 protein lp_1415, found in Lactiplantibacillus plantarum (strain ATCC BAA-793 / NCIMB 8826 / WCFS1) (Lactobacillus plantarum).